The chain runs to 69 residues: Calcium-binding protein (69 aa).

2 EF-hand domains span residues 2 to 37 and 38 to 69; these read VNRT…VNCP and FKKE…VLCS. Ca(2+) contacts are provided by aspartate 15, aspartate 17, serine 19, lysine 21, glutamate 26, aspartate 51, aspartate 53, aspartate 55, glutamine 57, and glutamate 62.

This chain is Calcium-binding protein, found in Schistosoma mansoni (Blood fluke).